The following is a 160-amino-acid chain: MQISIFAVGRMKSGAEQKLVQHYLDRFSKSSGAVGFHLKKLQEIPESRAQTACQRMEEEGRKLIEFLPEKCQLIVLDERGESISSAAFAEKLGCYRDEGIRDVIIALGGPDGHNEQIRNRADFLLSFGFMTWPHQIARILLTEQLYRAVTIANHHPYHRF.

S-adenosyl-L-methionine contacts are provided by residues L76, G108, and 127-132 (FGFMTW).

Belongs to the RNA methyltransferase RlmH family. Homodimer.

The protein resides in the cytoplasm. The catalysed reaction is pseudouridine(1915) in 23S rRNA + S-adenosyl-L-methionine = N(3)-methylpseudouridine(1915) in 23S rRNA + S-adenosyl-L-homocysteine + H(+). Its function is as follows. Specifically methylates the pseudouridine at position 1915 (m3Psi1915) in 23S rRNA. The sequence is that of Ribosomal RNA large subunit methyltransferase H from Bartonella tribocorum (strain CIP 105476 / IBS 506).